Here is a 286-residue protein sequence, read N- to C-terminus: Large ribosomal subunit protein uL2 (286 aa).

Disordered stretches follow at residues 22–59 and 215–286; these read KELT…GGGH and LGRR…KLHK. Over residues 230-240 the composition is skewed to basic and acidic residues; that stretch reads DHPHGGGEGRT. Positions 255–286 are enriched in basic residues; the sequence is KGGRTRQKRKPSNSSIVRRRKSRRYGQLKLHK.

The protein belongs to the universal ribosomal protein uL2 family. In terms of assembly, part of the 50S ribosomal subunit. Forms a bridge to the 30S subunit in the 70S ribosome.

Its function is as follows. One of the primary rRNA binding proteins. Required for association of the 30S and 50S subunits to form the 70S ribosome, for tRNA binding and peptide bond formation. It has been suggested to have peptidyltransferase activity; this is somewhat controversial. Makes several contacts with the 16S rRNA in the 70S ribosome. The protein is Large ribosomal subunit protein uL2 of Rhodopirellula baltica (strain DSM 10527 / NCIMB 13988 / SH1).